The chain runs to 263 residues: Acyl-[acyl-carrier-protein]--UDP-N-acetylglucosamine O-acyltransferase (263 aa).

Belongs to the transferase hexapeptide repeat family. LpxA subfamily. In terms of assembly, homotrimer.

The protein resides in the cytoplasm. The catalysed reaction is a (3R)-hydroxyacyl-[ACP] + UDP-N-acetyl-alpha-D-glucosamine = a UDP-3-O-[(3R)-3-hydroxyacyl]-N-acetyl-alpha-D-glucosamine + holo-[ACP]. The protein operates within glycolipid biosynthesis; lipid IV(A) biosynthesis; lipid IV(A) from (3R)-3-hydroxytetradecanoyl-[acyl-carrier-protein] and UDP-N-acetyl-alpha-D-glucosamine: step 1/6. In terms of biological role, involved in the biosynthesis of lipid A, a phosphorylated glycolipid that anchors the lipopolysaccharide to the outer membrane of the cell. This is Acyl-[acyl-carrier-protein]--UDP-N-acetylglucosamine O-acyltransferase from Stenotrophomonas maltophilia (strain K279a).